The chain runs to 208 residues: Interleukin-6 (208 aa).

Residues 1–20 (MNSLSTIAFSLGLLLVTATA) form the signal peptide. Cysteine 67 and cysteine 73 are joined by a disulfide. Residue serine 76 is modified to Phosphoserine. Cysteine 96 and cysteine 106 form a disulfide bridge. Residue asparagine 167 is glycosylated (N-linked (GlcNAc...) asparagine).

This sequence belongs to the IL-6 superfamily. In terms of assembly, component of a hexamer of two molecules each of IL6, IL6R and IL6ST; first binds to IL6R to associate with the signaling subunit IL6ST. Interacts with IL6R (via the N-terminal ectodomain); this interaction may be affected by IL6R-binding with SORL1, hence decreasing IL6 cis signaling. Interacts with SORL1 (via the N-terminal ectodomain); this interaction leads to IL6 internalization and lysosomal degradation. May form a trimeric complex with the soluble SORL1 ectodomain and soluble IL6R receptor; this interaction might stabilize circulating IL6, hence promoting IL6 trans signaling.

The protein localises to the secreted. Cytokine with a wide variety of biological functions in immunity, tissue regeneration, and metabolism. Binds to IL6R, then the complex associates to the signaling subunit IL6ST/gp130 to trigger the intracellular IL6-signaling pathway. The interaction with the membrane-bound IL6R and IL6ST stimulates 'classic signaling', whereas the binding of IL6 and soluble IL6R to IL6ST stimulates 'trans-signaling'. Alternatively, 'cluster signaling' occurs when membrane-bound IL6:IL6R complexes on transmitter cells activate IL6ST receptors on neighboring receiver cells. In terms of biological role, IL6 is a potent inducer of the acute phase response. Rapid production of IL6 contributes to host defense during infection and tissue injury, but excessive IL6 synthesis is involved in disease pathology. In the innate immune response, is synthesized by myeloid cells, such as macrophages and dendritic cells, upon recognition of pathogens through toll-like receptors (TLRs) at the site of infection or tissue injury. In the adaptive immune response, is required for the differentiation of B cells into immunoglobulin-secreting cells. Plays a major role in the differentiation of CD4(+) T cell subsets. Essential factor for the development of T follicular helper (Tfh) cells that are required for the induction of germinal-center formation. Required to drive naive CD4(+) T cells to the Th17 lineage. Also required for proliferation of myeloma cells and the survival of plasmablast cells. Its function is as follows. Acts as an essential factor in bone homeostasis and on vessels directly or indirectly by induction of VEGF, resulting in increased angiogenesis activity and vascular permeability. Induces, through 'trans-signaling' and synergistically with IL1B and TNF, the production of VEGF. Involved in metabolic controls, is discharged into the bloodstream after muscle contraction increasing lipolysis and improving insulin resistance. 'Trans-signaling' in central nervous system also regulates energy and glucose homeostasis. Mediates, through GLP-1, crosstalk between insulin-sensitive tissues, intestinal L cells and pancreatic islets to adapt to changes in insulin demand. Also acts as a myokine. Plays a protective role during liver injury, being required for maintenance of tissue regeneration. Also has a pivotal role in iron metabolism by regulating HAMP/hepcidin expression upon inflammation or bacterial infection. Through activation of IL6ST-YAP-NOTCH pathway, induces inflammation-induced epithelial regeneration. The chain is Interleukin-6 (IL6) from Delphinapterus leucas (Beluga whale).